Here is a 1011-residue protein sequence, read N- to C-terminus: Ankyrin repeat domain-containing protein 18B (1011 aa).

5 ANK repeats span residues 67-96 (KDRT…QINI), 100-129 (LNRT…NPNI), 133-162 (YGNT…NIEA), 166-195 (EGNT…NIHA), and 199-228 (FKRT…HISS). Disordered stretches follow at residues 264–330 (LRND…GKKK) and 533–554 (MHPN…SEER). 4 coiled-coil regions span residues 277–319 (ENLK…ENKQ), 385–639 (NEEM…ELVD), 692–722 (ISLL…CLEM), and 752–908 (FKKL…EAFA). Residues 280–293 (KKRKKRKKLKKRKE) are compositionally biased toward basic residues. Residues 294-319 (GAKAEHNLKVASEEKQERLERSENKQ) show a composition bias toward basic and acidic residues.

The protein is Ankyrin repeat domain-containing protein 18B (ANKRD18B) of Homo sapiens (Human).